Consider the following 179-residue polypeptide: Deoxyuridine 5'-triphosphate nucleotidohydrolase, mitochondrial (179 aa).

Residues Met-1 to Lys-41 constitute a mitochondrion transit peptide. DUTP contacts are provided by residues Arg-97–Gly-99, Gly-111–Asp-114, Gly-122, Arg-165, and Phe-170–Gly-171.

It belongs to the dUTPase family. Homotrimer. The cofactor is Mg(2+).

Its subcellular location is the mitochondrion. The enzyme catalyses dUTP + H2O = dUMP + diphosphate + H(+). It participates in pyrimidine metabolism; dUMP biosynthesis; dUMP from dCTP (dUTP route): step 2/2. Its function is as follows. This enzyme is involved in nucleotide metabolism: it produces dUMP, the immediate precursor of thymidine nucleotides and it decreases the intracellular concentration of dUTP so that uracil cannot be incorporated into DNA. This is Deoxyuridine 5'-triphosphate nucleotidohydrolase, mitochondrial (dut) from Dictyostelium discoideum (Social amoeba).